Consider the following 143-residue polypeptide: Large ribosomal subunit protein uL13 (143 aa).

The protein belongs to the universal ribosomal protein uL13 family. In terms of assembly, part of the 50S ribosomal subunit.

Its function is as follows. This protein is one of the early assembly proteins of the 50S ribosomal subunit, although it is not seen to bind rRNA by itself. It is important during the early stages of 50S assembly. This is Large ribosomal subunit protein uL13 from Symbiobacterium thermophilum (strain DSM 24528 / JCM 14929 / IAM 14863 / T).